The sequence spans 664 residues: uncharacterized protein (664 aa).

This is an uncharacterized protein from Mycoplasma pneumoniae (strain ATCC 29342 / M129 / Subtype 1) (Mycoplasmoides pneumoniae).